The chain runs to 535 residues: Sodium/hydrogen exchanger 1 (535 aa).

Residues 1–21 are Cytoplasmic-facing; it reads MGMEVAAARLGALYTTSDYAS. A helical membrane pass occupies residues 22-42; that stretch reads VVSINLFVALLCACIVLGHLL. Residues 43–46 lie on the Vacuolar side of the membrane; sequence EENR. Residues 47–67 form a helical membrane-spanning segment; the sequence is WVNESITALIIGLCTGVVILL. Topologically, residues 68 to 75 are cytoplasmic; the sequence is MTKGKSSH. The chain crosses the membrane as a helical span at residues 76 to 96; the sequence is LFVFSEDLFFIYLLPPIIFNA. Residues 97-114 are Vacuolar-facing; the sequence is GFQVKKKQFFRNFMTITL. Residues 115-135 traverse the membrane as a helical segment; it reads FGAVGTMISFFTISIAAIAIF. Topologically, residues 136 to 137 are cytoplasmic; it reads SR. The chain crosses the membrane as a helical span at residues 138–158; it reads MNIGTLDVGDFLAIGAIFSAT. Residues 159–173 lie on the Vacuolar side of the membrane; the sequence is DSVCTLQVLNQDETP. Residues 174-194 traverse the membrane as a helical segment; that stretch reads FLYSLVFGEGVVNDATSIVLF. Residues 195-218 lie on the Cytoplasmic side of the membrane; it reads NALQNFDLVHIDAAVVLKFLGNFF. Residues 219-239 traverse the membrane as a helical segment; the sequence is YLFLSSTFLGVFAGLLSAYII. Over 240-264 the chain is Vacuolar; sequence KKLYIGRHSTDREVALMMLMAYLSY. A helical membrane pass occupies residues 265 to 285; sequence MLAELLDLSGILTVFFCGIVM. The Cytoplasmic portion of the chain corresponds to 286-304; it reads SHYTWHNVTESSRVTTKHA. Residues 305 to 325 form a helical membrane-spanning segment; sequence FATLSFIAETFLFLYVGMDAL. Topologically, residues 326 to 344 are vacuolar; it reads DIEKWEFASDRPGKSIGIS. Residues 345–365 traverse the membrane as a helical segment; that stretch reads SILLGLVLIGRAAFVFPLSFL. At 366 to 381 the chain is on the cytoplasmic side; that stretch reads SNLTKKAPNEKITWRQ. Residues 382–402 form a helical membrane-spanning segment; it reads QVVIWWAGLMRGAVSIALAYN. Residues 403-415 lie on the Vacuolar side of the membrane; it reads KFTRSGHTQLHGN. The helical transmembrane segment at 416 to 436 threads the bilayer; it reads AIMITSTITVVLFSTMVFGMM. Over 437-535 the chain is Cytoplasmic; the sequence is TKPLIRLLLP…SPTEQSHGGR (99 aa). The tract at residues 452-478 is disordered; that stretch reads VTSEPSSPKSLHSPLLTSMQGSDLEST. Residues 454–469 are compositionally biased toward low complexity; that stretch reads SEPSSPKSLHSPLLTS.

Belongs to the monovalent cation:proton antiporter 1 (CPA1) transporter (TC 2.A.36) family.

It is found in the vacuole membrane. The catalysed reaction is Na(+)(in) + H(+)(out) = Na(+)(out) + H(+)(in). It carries out the reaction K(+)(in) + H(+)(out) = K(+)(out) + H(+)(in). In terms of biological role, vacuolar antiporter that acts in low affinity electroneutral exchange of protons H(+) for cations such as Na(+) or K(+) across membranes. Plays important roles in the transport of Na(+) and K(+) accumulated in the cytoplasm into vacuoles, and is involved in salt stress tolerance. The polypeptide is Sodium/hydrogen exchanger 1 (Oryza sativa subsp. japonica (Rice)).